Here is a 354-residue protein sequence, read N- to C-terminus: DNA polymerase IV (354 aa).

Positions 6 to 187 (IIHVDCDCFY…LPVARLHGVG (182 aa)) constitute a UmuC domain. Residues D10 and D105 each contribute to the Mg(2+) site. E106 is an active-site residue.

Belongs to the DNA polymerase type-Y family. As to quaternary structure, monomer. Mg(2+) serves as cofactor.

It localises to the cytoplasm. The catalysed reaction is DNA(n) + a 2'-deoxyribonucleoside 5'-triphosphate = DNA(n+1) + diphosphate. Its function is as follows. Poorly processive, error-prone DNA polymerase involved in untargeted mutagenesis. Copies undamaged DNA at stalled replication forks, which arise in vivo from mismatched or misaligned primer ends. These misaligned primers can be extended by PolIV. Exhibits no 3'-5' exonuclease (proofreading) activity. May be involved in translesional synthesis, in conjunction with the beta clamp from PolIII. This is DNA polymerase IV from Pseudomonas putida (strain GB-1).